Consider the following 467-residue polypeptide: MAP kinase-interacting serine/threonine-protein kinase 2 (467 aa).

One can recognise a Protein kinase domain in the interval 83-367; the sequence is QLQQEILGEG…AAQVLQHPWV (285 aa). ATP-binding positions include 89 to 97 and Lys-112; that span reads LGEGAYAKV. Asp-204 acts as the Proton acceptor in catalysis. Zn(2+) is bound by residues Cys-298, Cys-310, and Cys-313. The segment at 432 to 467 is disordered; that stretch reads MQLSPPSESKLAKRRQQGSKGGISPPSLAPLLIVSD.

Belongs to the protein kinase superfamily. CAMK Ser/Thr protein kinase family. The cofactor is Mg(2+). Requires Zn(2+) as cofactor.

It carries out the reaction L-seryl-[protein] + ATP = O-phospho-L-seryl-[protein] + ADP + H(+). The enzyme catalyses L-threonyl-[protein] + ATP = O-phospho-L-threonyl-[protein] + ADP + H(+). May play a role in the response to environmental stress and cytokines. Appears to regulate translation by phosphorylating EIF4E, thus increasing the affinity of this protein for the 7-methylguanosine-containing mRNA cap. The protein is MAP kinase-interacting serine/threonine-protein kinase 2 (mknk2) of Xenopus laevis (African clawed frog).